Here is an 82-residue protein sequence, read N- to C-terminus: Large ribosomal subunit protein bL31 (82 aa).

This sequence belongs to the bacterial ribosomal protein bL31 family. Type A subfamily. In terms of assembly, part of the 50S ribosomal subunit.

Its function is as follows. Binds the 23S rRNA. The protein is Large ribosomal subunit protein bL31 of Rippkaea orientalis (strain PCC 8801 / RF-1) (Cyanothece sp. (strain PCC 8801)).